A 162-amino-acid chain; its full sequence is N5-carboxyaminoimidazole ribonucleotide mutase (162 aa).

Residues serine 11, aspartate 14, and arginine 41 each coordinate substrate.

It belongs to the AIR carboxylase family. Class I subfamily.

It carries out the reaction 5-carboxyamino-1-(5-phospho-D-ribosyl)imidazole + H(+) = 5-amino-1-(5-phospho-D-ribosyl)imidazole-4-carboxylate. It functions in the pathway purine metabolism; IMP biosynthesis via de novo pathway; 5-amino-1-(5-phospho-D-ribosyl)imidazole-4-carboxylate from 5-amino-1-(5-phospho-D-ribosyl)imidazole (N5-CAIR route): step 2/2. Its function is as follows. Catalyzes the conversion of N5-carboxyaminoimidazole ribonucleotide (N5-CAIR) to 4-carboxy-5-aminoimidazole ribonucleotide (CAIR). The sequence is that of N5-carboxyaminoimidazole ribonucleotide mutase from Bacillus subtilis (strain 168).